The chain runs to 443 residues: Sulfoquinovose isomerase (443 aa).

It belongs to the SqvD family.

The catalysed reaction is 6-sulfo-beta-D-quinovose = 6-deoxy-6-sulfo-D-fructose. In terms of biological role, part of the sulfo-EMP2 pathway, a D-sulfoquinovose degradation pathway that produces sulfolactate (SL). Catalyzes the isomerization of sulfoquinovose (SQ) to 6-deoxy-6-sulfo-D-fructose (SF). This chain is Sulfoquinovose isomerase, found in Alkalicoccus urumqiensis (Bacillus urumqiensis).